The sequence spans 469 residues: MGRNVKTKAKRKNKKKAEASSSEIPSIPTRVWQPGVDTLEDGEELQCDPSAYNSLHGFHVGWPCLSFDILGDKLGLNRTEFPHTLYMVAGTQAEKAAHNSIGLFKITNVSGKRRDVVPKTFGNGEDEDEDDEDDSDSDDDDGDEASKTPNIQVRRVAHHGCVNRIRAMPQNSHICVSWADSGHVQVWDMSSHLNALAESETEGKDGTSPVLNQAPLVNFSGHKDEGYAIDWSPATAGRLLSGDCKSMIHLWEPASGSWAVDPIPFAGHTASVEDLQWSPAEENVFASCSVDGSVAVWDIRLGKSPALSFKAHNADVNVISWNRLASCMLASGSDDGTFSIRDLRLIKGGDAVVAHFEYHKHPITSIEWSAHEASTLAVTSGDNQLTIWDLSLEKDEEEEAEFNAQTKELVNTPQDLPPQLLFVHQGQKDLKELHWHNQIPGMIISTAGDGFNILMPYNIQNTLPSELPA.

Residues 1–15 show a composition bias toward basic residues; it reads MGRNVKTKAKRKNKK. 2 disordered regions span residues 1 to 29 and 115 to 150; these read MGRNVKTKAKRKNKKKAEASSSEIPSIPT and DVVPKTFGNGEDEDEDDEDDSDSDDDDGDEASKTPN. The span at 124–143 shows a compositional bias: acidic residues; that stretch reads GEDEDEDDEDDSDSDDDDGD. WD repeat units follow at residues 157–197, 221–261, 267–307, 311–351, 358–398, and 425–464; these read AHHG…NALA, GHKD…WAVD, GHTA…SPAL, AHNA…GGDA, YHKH…DEEE, and QGQKDLKELHWHNQIPGMIISTAGDGFNILMPYNIQNTLP.

This sequence belongs to the WD repeat RBAP46/RBAP48/MSI1 family. In terms of assembly, probable component of CULLIN4 (CUL4) RING ligase (CRL4) complexes. Interacts with DDB1A and DDB1B. Associates with HSP90-1.

The protein operates within protein modification; protein ubiquitination. Its function is as follows. Probable substrate receptor of CRL4 E3 ligase complexes acting as negative regulators of thermotolerance by disturbing the action of HSP90-1 and by preventing the expression of heat-inducible genes (e.g. HSP14.7, HSP21, At2g03020 and WRKY28). The polypeptide is Protein HEAT STRESS TOLERANT DWD 1 (Arabidopsis thaliana (Mouse-ear cress)).